The sequence spans 282 residues: Succinate dehydrogenase [ubiquinone] iron-sulfur subunit, mitochondrial (282 aa).

A mitochondrion-targeting transit peptide spans 1-30; it reads MAAVVGVSLKRGFSATALGRVGLQFQACRE. Residues Lys-53 and Lys-57 each carry the N6-acetyllysine modification. One can recognise a 2Fe-2S ferredoxin-type domain in the interval 56-135; that stretch reads DKPRMQTYKV…VSKIYPLPHM (80 aa). Residues Cys-95, Cys-100, Cys-103, and Cys-115 each coordinate [2Fe-2S] cluster. The segment at 148 to 220 is interaction with SDHAF1; sequence FYAQYKSIEP…PAVLMQAYRW (73 aa). The 31-residue stretch at 178–208 folds into the 4Fe-4S ferredoxin-type domain; sequence DREKLDGLYECILCACCSTSCPSYWWNGDKY. Cys-188, Cys-191, and Cys-194 together coordinate [4Fe-4S] cluster. A [3Fe-4S] cluster-binding site is contributed by Cys-198. Trp-203 is an a ubiquinone binding site. 2 residues coordinate [3Fe-4S] cluster: Cys-245 and Cys-251. Cys-255 is a binding site for [4Fe-4S] cluster.

Belongs to the succinate dehydrogenase/fumarate reductase iron-sulfur protein family. Component of complex II composed of four subunits: the flavoprotein (FP) SDHA, iron-sulfur protein (IP) SDHB, and a cytochrome b560 composed of SDHC and SDHD. Interacts with SDHAF1; the interaction is required for iron-sulfur cluster incorporation into SDHB. The cofactor is [2Fe-2S] cluster. [3Fe-4S] cluster is required as a cofactor. It depends on [4Fe-4S] cluster as a cofactor.

The protein resides in the mitochondrion inner membrane. It catalyses the reaction a quinone + succinate = fumarate + a quinol. It carries out the reaction (R)-malate + a quinone = enol-oxaloacetate + a quinol. The enzyme catalyses (S)-malate + a quinone = enol-oxaloacetate + a quinol. Its pathway is carbohydrate metabolism; tricarboxylic acid cycle; fumarate from succinate (eukaryal route): step 1/1. With respect to regulation, enol-oxaloacetate inhibits the succinate dehydrogenase activity. Iron-sulfur protein (IP) subunit of the succinate dehydrogenase complex (mitochondrial respiratory chain complex II), responsible for transferring electrons from succinate to ubiquinone (coenzyme Q). SDH also oxidizes malate to the non-canonical enol form of oxaloacetate, enol-oxaloacetate. Enol-oxaloacetate, which is a potent inhibitor of the succinate dehydrogenase activity, is further isomerized into keto-oxaloacetate. This Rattus norvegicus (Rat) protein is Succinate dehydrogenase [ubiquinone] iron-sulfur subunit, mitochondrial (Sdhb).